The chain runs to 109 residues: Cell division protein ZapA (109 aa).

Residues 21 to 99 (PEQRDALNQA…IEQALLEQGR (79 aa)) are a coiled coil.

Belongs to the ZapA family. Type 1 subfamily. As to quaternary structure, homodimer. Interacts with FtsZ.

It localises to the cytoplasm. Its function is as follows. Activator of cell division through the inhibition of FtsZ GTPase activity, therefore promoting FtsZ assembly into bundles of protofilaments necessary for the formation of the division Z ring. It is recruited early at mid-cell but it is not essential for cell division. The chain is Cell division protein ZapA from Cronobacter sakazakii (strain ATCC BAA-894) (Enterobacter sakazakii).